A 420-amino-acid polypeptide reads, in one-letter code: Tyrosine--tRNA ligase (420 aa).

Y36 serves as a coordination point for L-tyrosine. The 'HIGH' region signature appears at 41-50 (PTADSLHIGH). The L-tyrosine site is built by Y170 and Q174. Residues 231-235 (KFGKT) carry the 'KMSKS' region motif. K234 contributes to the ATP binding site. Positions 353-420 (RNIVEVIVET…KKKYFMVNYK (68 aa)) constitute an S4 RNA-binding domain.

It belongs to the class-I aminoacyl-tRNA synthetase family. TyrS type 1 subfamily. In terms of assembly, homodimer.

It is found in the cytoplasm. The enzyme catalyses tRNA(Tyr) + L-tyrosine + ATP = L-tyrosyl-tRNA(Tyr) + AMP + diphosphate + H(+). In terms of biological role, catalyzes the attachment of tyrosine to tRNA(Tyr) in a two-step reaction: tyrosine is first activated by ATP to form Tyr-AMP and then transferred to the acceptor end of tRNA(Tyr). The polypeptide is Tyrosine--tRNA ligase (Staphylococcus saprophyticus subsp. saprophyticus (strain ATCC 15305 / DSM 20229 / NCIMB 8711 / NCTC 7292 / S-41)).